The chain runs to 197 residues: uncharacterized protein (197 aa).

The next 4 membrane-spanning stretches (helical) occupy residues 11–31, 85–105, 109–129, and 174–194; these read IALIVVGIIALFLPWLTISAS, STFMMIFGIIPIILYIASIFV, AVVVGAGIAGITCASIFVVLF, and VGTGWYLTMIIGLALIAYPFI.

The protein resides in the cell membrane. This is an uncharacterized protein from Methanocaldococcus jannaschii (strain ATCC 43067 / DSM 2661 / JAL-1 / JCM 10045 / NBRC 100440) (Methanococcus jannaschii).